Reading from the N-terminus, the 248-residue chain is 2,3-bisphosphoglycerate-dependent phosphoglycerate mutase (248 aa).

Residues 8–15, 21–22, R60, 87–90, K98, 114–115, and 183–184 each bind substrate; these read RHGESLWN, TG, EKHY, RR, and GN. H9 functions as the Tele-phosphohistidine intermediate in the catalytic mechanism. The active-site Proton donor/acceptor is the E87.

It belongs to the phosphoglycerate mutase family. BPG-dependent PGAM subfamily.

It carries out the reaction (2R)-2-phosphoglycerate = (2R)-3-phosphoglycerate. It participates in carbohydrate degradation; glycolysis; pyruvate from D-glyceraldehyde 3-phosphate: step 3/5. Functionally, catalyzes the interconversion of 2-phosphoglycerate and 3-phosphoglycerate. The protein is 2,3-bisphosphoglycerate-dependent phosphoglycerate mutase of Porphyromonas gingivalis (strain ATCC 33277 / DSM 20709 / CIP 103683 / JCM 12257 / NCTC 11834 / 2561).